The primary structure comprises 536 residues: Velvet complex subunit B (536 aa).

Over residues 1 to 26 (MIQRTTDPAAGSSTSGPPTNSLSWGS) the composition is skewed to polar residues. Disordered regions lie at residues 1–27 (MIQR…WGSR), 106–143 (PNAA…AIPF), 157–409 (SAPA…RTLV), and 508–536 (KLPL…EESD). The Velvet domain maps to 25–512 (GSRHNGKLYT…NQQNMKLPLR (488 aa)). Residues 114–143 (PPMPAKPRRPTNPPPPSNTHGSPPAPAIPF) are compositionally biased toward pro residues. Composition is skewed to low complexity over residues 158–170 (APAS…SASA) and 190–265 (PYGP…YPPY). Residues 280–305 (TSNFDHSQPVTSSVDQETNSPVVTTT) show a composition bias toward polar residues. Basic and acidic residues predominate over residues 306-315 (ARDDDQREGE). Residues 328–342 (PSNSGAPSTSPTAST) show a composition bias toward low complexity. Over residues 356–399 (EEREGPDGGPDLREPIEPGSTKAREEEDARTGTEKGDPKDKSDA) the composition is skewed to basic and acidic residues. Residues 400–409 (QRATYTRTLV) show a composition bias toward polar residues. Positions 511-525 (LRNRHGSGSKRRRRG) are enriched in basic residues.

The protein belongs to the velvet family. VelB subfamily. As to quaternary structure, component of the heterotrimeric velvet complex composed of laeA, veA and velB; VeA acting as a bridging protein between laeA and velB. Forms a heterodimeric complex with vosA; the formation of the velB-vosA complex is light-dependent.

It is found in the nucleus. It localises to the cytoplasm. Functionally, component of the velvet transcription factor complex that controls sexual/asexual developmental ratio in response to light, promoting sexual development in the darkness while stimulating asexual sporulation under illumination. The velvet complex acts as a global regulator for secondary metabolite gene expression. Component of the velB-VosA heterodimeric complex that plays a dual role in activating genes associated with spore maturation and repressing certain development-associated genes. The velB-VosA complex binds DNA through the DNA-binding domain of vosA that recognizes an 11-nucleotide consensus sequence 5'-CTGGCCGCGGC-3' consisting of two motifs in the promoters of key developmental regulatory genes. In Schizophyllum commune (strain H4-8 / FGSC 9210) (Split gill fungus), this protein is Velvet complex subunit B.